We begin with the raw amino-acid sequence, 579 residues long: uncharacterized protein (579 aa).

Belongs to the UbiD family.

This is an uncharacterized protein from Chlamydia trachomatis serovar D (strain ATCC VR-885 / DSM 19411 / UW-3/Cx).